Reading from the N-terminus, the 217-residue chain is Protein DJ-1alpha (217 aa).

The Nucleophile role is filled by cysteine 133. Residue cysteine 133 is modified to Cysteine sulfinic acid (-SO2H); alternate.

As to expression, expressed in testis (at protein level).

Its subcellular location is the cytoplasm. The protein localises to the nucleus. It localises to the mitochondrion. Its function is as follows. Plays an important role in cell protection against oxidative stress and cell death acting as oxidative stress sensor. Does not play a role in methylglyoxal detoxification. This is Protein DJ-1alpha from Drosophila melanogaster (Fruit fly).